Reading from the N-terminus, the 519-residue chain is Aldehyde dehydrogenase X, mitochondrial (519 aa).

A mitochondrion-targeting transit peptide spans 1–19; it reads MLTARLLLPRLLCLQGRTT. Residue Lys53 is modified to N6-acetyllysine. At Lys54 the chain carries N6-acetyllysine; alternate. Lys54 bears the N6-succinyllysine; alternate mark. Lys83 is modified (N6-succinyllysine). 264–269 provides a ligand contact to NAD(+); that stretch reads GSTEVG. Residue Glu287 is the Proton acceptor of the active site. Residue Cys321 is the Nucleophile of the active site. Residues Lys366, Lys385, Lys401, Lys416, and Lys428 each carry the N6-acetyllysine; alternate modification. N6-succinyllysine; alternate is present on residues Lys366, Lys385, Lys401, Lys416, and Lys428. N6-acetyllysine is present on Lys431.

This sequence belongs to the aldehyde dehydrogenase family. As to quaternary structure, homotetramer.

Its subcellular location is the mitochondrion matrix. It catalyses the reaction an aldehyde + NAD(+) + H2O = a carboxylate + NADH + 2 H(+). Its pathway is alcohol metabolism; ethanol degradation; acetate from ethanol: step 2/2. Functionally, ALDHs play a major role in the detoxification of alcohol-derived acetaldehyde. They are involved in the metabolism of corticosteroids, biogenic amines, neurotransmitters, and lipid peroxidation. The chain is Aldehyde dehydrogenase X, mitochondrial (Aldh1b1) from Mus musculus (Mouse).